A 250-amino-acid chain; its full sequence is MTPDDPRDASDASLADATADSASRGHGSFFGRRKGHKLRAHQAELIADLLPQLSFDLAAPPPADLRALFEPGVDQVKLEIGFGGGEHLVAEAEAHPATGFIGCEPYVNGMAKILAQIEARGIRNIRLFAGDAAELLAWAPKASLARIDLIHPDPWPKRRHWKRRFVQDATVTAMARALRDDGEFRFVCDIDDYSAWTLSHLTRSPDFAWTAERARDWQNPFAGYTMTRYGRKAEREGRRAAYLHFQRNAA.

Over residues 1–10 (MTPDDPRDAS) the composition is skewed to basic and acidic residues. A disordered region spans residues 1 to 30 (MTPDDPRDASDASLADATADSASRGHGSFF). The segment covering 11-24 (DASLADATADSASR) has biased composition (low complexity). S-adenosyl-L-methionine is bound by residues glutamate 79, glutamate 104, aspartate 131, and aspartate 153. Residue aspartate 153 is part of the active site. Residues lysine 157 and aspartate 189 each contribute to the substrate site.

The protein belongs to the class I-like SAM-binding methyltransferase superfamily. TrmB family.

The catalysed reaction is guanosine(46) in tRNA + S-adenosyl-L-methionine = N(7)-methylguanosine(46) in tRNA + S-adenosyl-L-homocysteine. It functions in the pathway tRNA modification; N(7)-methylguanine-tRNA biosynthesis. In terms of biological role, catalyzes the formation of N(7)-methylguanine at position 46 (m7G46) in tRNA. In Rhodopseudomonas palustris (strain BisA53), this protein is tRNA (guanine-N(7)-)-methyltransferase.